Here is a 384-residue protein sequence, read N- to C-terminus: tRNA-specific 2-thiouridylase MnmA (384 aa).

Residues 9–16 (GMSGGVDS) and methionine 35 contribute to the ATP site. The tract at residues 95-97 (NPD) is interaction with target base in tRNA. Cysteine 100 (nucleophile) is an active-site residue. Residues cysteine 100 and cysteine 196 are joined by a disulfide bond. Glycine 124 contributes to the ATP binding site. The segment at 146-148 (KDQ) is interaction with tRNA. Cysteine 196 (cysteine persulfide intermediate) is an active-site residue. The interaction with tRNA stretch occupies residues 308-309 (RY).

This sequence belongs to the MnmA/TRMU family.

It localises to the cytoplasm. The catalysed reaction is S-sulfanyl-L-cysteinyl-[protein] + uridine(34) in tRNA + AH2 + ATP = 2-thiouridine(34) in tRNA + L-cysteinyl-[protein] + A + AMP + diphosphate + H(+). Its function is as follows. Catalyzes the 2-thiolation of uridine at the wobble position (U34) of tRNA, leading to the formation of s(2)U34. This chain is tRNA-specific 2-thiouridylase MnmA, found in Burkholderia ambifaria (strain ATCC BAA-244 / DSM 16087 / CCUG 44356 / LMG 19182 / AMMD) (Burkholderia cepacia (strain AMMD)).